The chain runs to 468 residues: ATP synthase subunit beta (468 aa).

155–162 is a binding site for ATP; that stretch reads GGAGVGKT.

The protein belongs to the ATPase alpha/beta chains family. In terms of assembly, F-type ATPases have 2 components, CF(1) - the catalytic core - and CF(0) - the membrane proton channel. CF(1) has five subunits: alpha(3), beta(3), gamma(1), delta(1), epsilon(1). CF(0) has three main subunits: a(1), b(2) and c(9-12). The alpha and beta chains form an alternating ring which encloses part of the gamma chain. CF(1) is attached to CF(0) by a central stalk formed by the gamma and epsilon chains, while a peripheral stalk is formed by the delta and b chains.

It is found in the cell membrane. The enzyme catalyses ATP + H2O + 4 H(+)(in) = ADP + phosphate + 5 H(+)(out). Its function is as follows. Produces ATP from ADP in the presence of a proton gradient across the membrane. The catalytic sites are hosted primarily by the beta subunits. The polypeptide is ATP synthase subunit beta (Streptococcus thermophilus (strain CNRZ 1066)).